The chain runs to 997 residues: Protein translocase subunit SecA (997 aa).

ATP-binding positions include Gln-84, 102–106, and Asp-582; that span reads GEGKT. Positions 950-997 are disordered; the sequence is PYVPVPEAKPEPSEVFGVERKRATPPPQPGLSRAERRRLMRQEKKRKK. A compositionally biased stretch (basic and acidic residues) spans 957–971; sequence AKPEPSEVFGVERKR. The span at 984 to 997 shows a compositional bias: basic residues; that stretch reads ERRRLMRQEKKRKK.

This sequence belongs to the SecA family. As to quaternary structure, monomer and homodimer. Part of the essential Sec protein translocation apparatus which comprises SecA, SecYEG and auxiliary proteins SecDF. Other proteins may also be involved.

It is found in the cell inner membrane. Its subcellular location is the cytoplasm. The enzyme catalyses ATP + H2O + cellular proteinSide 1 = ADP + phosphate + cellular proteinSide 2.. In terms of biological role, part of the Sec protein translocase complex. Interacts with the SecYEG preprotein conducting channel. Has a central role in coupling the hydrolysis of ATP to the transfer of proteins into and across the cell membrane, serving as an ATP-driven molecular motor driving the stepwise translocation of polypeptide chains across the membrane. This Thermus thermophilus (strain ATCC BAA-163 / DSM 7039 / HB27) protein is Protein translocase subunit SecA.